A 390-amino-acid chain; its full sequence is L-serine phosphate decarboxylase Cj1436c (390 aa).

An N6-(pyridoxal phosphate)lysine modification is found at lysine 243.

The protein belongs to the class-I pyridoxal-phosphate-dependent aminotransferase family. It depends on pyridoxal 5'-phosphate as a cofactor.

The catalysed reaction is O-phospho-L-serine + H(+) = phosphoethanolamine + CO2. It participates in capsule biogenesis; capsule polysaccharide biosynthesis. Functionally, pyridoxal phosphate (PLP)-dependent decarboxylase involved in the biosynthesis of amidated D-glucuronic acid structures found on the capsular polysaccharide (CPS) of C.jejuni. Catalyzes the decarboxylation of L-serine phosphate to ethanolamine phosphate. Less active with L-threonine phosphate. No activity with L-serine, L-threonine, L-aspartate or L-glutamate. This chain is L-serine phosphate decarboxylase Cj1436c, found in Campylobacter jejuni subsp. jejuni serotype O:2 (strain ATCC 700819 / NCTC 11168).